A 307-amino-acid polypeptide reads, in one-letter code: UDP-3-O-acyl-N-acetylglucosamine deacetylase (307 aa).

Residues H78, H241, and D245 each contribute to the Zn(2+) site. The Proton donor role is filled by H268.

It belongs to the LpxC family. Zn(2+) serves as cofactor.

It catalyses the reaction a UDP-3-O-[(3R)-3-hydroxyacyl]-N-acetyl-alpha-D-glucosamine + H2O = a UDP-3-O-[(3R)-3-hydroxyacyl]-alpha-D-glucosamine + acetate. It functions in the pathway glycolipid biosynthesis; lipid IV(A) biosynthesis; lipid IV(A) from (3R)-3-hydroxytetradecanoyl-[acyl-carrier-protein] and UDP-N-acetyl-alpha-D-glucosamine: step 2/6. In terms of biological role, catalyzes the hydrolysis of UDP-3-O-myristoyl-N-acetylglucosamine to form UDP-3-O-myristoylglucosamine and acetate, the committed step in lipid A biosynthesis. This Acidovorax sp. (strain JS42) protein is UDP-3-O-acyl-N-acetylglucosamine deacetylase.